Consider the following 226-residue polypeptide: Cell division protein SepF (226 aa).

Residues R20–N116 are disordered. Basic and acidic residues predominate over residues Y22–E44. Residues D45–A56 show a composition bias toward acidic residues. Over residues R62 to S95 the composition is skewed to basic and acidic residues. Positions R97–Y111 are enriched in polar residues.

It belongs to the SepF family. Homodimer. Interacts with FtsZ.

The protein resides in the cytoplasm. Functionally, cell division protein that is part of the divisome complex and is recruited early to the Z-ring. Probably stimulates Z-ring formation, perhaps through the cross-linking of FtsZ protofilaments. Its function overlaps with FtsA. The sequence is that of Cell division protein SepF from Salinispora arenicola (strain CNS-205).